A 350-amino-acid polypeptide reads, in one-letter code: tRNA N6-adenosine threonylcarbamoyltransferase (350 aa).

Fe cation contacts are provided by His-115 and His-119. Substrate is bound by residues 137–141 (IISGG), Asp-170, Gly-183, and Asn-281. Residue Asp-309 coordinates Fe cation.

This sequence belongs to the KAE1 / TsaD family. The cofactor is Fe(2+).

The protein resides in the cytoplasm. It carries out the reaction L-threonylcarbamoyladenylate + adenosine(37) in tRNA = N(6)-L-threonylcarbamoyladenosine(37) in tRNA + AMP + H(+). Required for the formation of a threonylcarbamoyl group on adenosine at position 37 (t(6)A37) in tRNAs that read codons beginning with adenine. Is involved in the transfer of the threonylcarbamoyl moiety of threonylcarbamoyl-AMP (TC-AMP) to the N6 group of A37, together with TsaE and TsaB. TsaD likely plays a direct catalytic role in this reaction. The chain is tRNA N6-adenosine threonylcarbamoyltransferase from Ehrlichia canis (strain Jake).